We begin with the raw amino-acid sequence, 259 residues long: Insulin-induced gene 1 protein (259 aa).

The Cytoplasmic segment spans residues 1–66; it reads MPRLHDHVWN…ARPGSWHHDL (66 aa). Residues 36 to 55 form a disordered region; it reads PGVPEPEHAPRGQRAGTTGC. Residues 67 to 89 form a helical membrane-spanning segment; it reads VQRSLVLFSFGVVLALVLNLLQI. Over 90–108 the chain is Extracellular; sequence QRNVTLFPDEVIATIFSSA. The helical transmembrane segment at 109 to 126 threads the bilayer; sequence WWVPPCCGTAAAVVGLLY. The Cytoplasmic segment spans residues 127 to 141; it reads PCIDSHLGEPHKFKR. Glycyl lysine isopeptide (Lys-Gly) (interchain with G-Cter in ubiquitin) cross-links involve residues lysine 138 and lysine 140. Residues 142 to 164 traverse the membrane as a helical segment; the sequence is EWASVMRCIAVFVGINHASAKLD. Residues 165–167 are Extracellular-facing; the sequence is FAN. The helical transmembrane segment at 168–186 threads the bilayer; that stretch reads NVQLSLTLAALSLGLWWTF. Residues 187–191 lie on the Cytoplasmic side of the membrane; sequence DRSRS. Phosphoserine is present on serine 189. Residues 192–213 traverse the membrane as a helical segment; the sequence is GLGLGITIAFLATLITQFLVYN. Over 214-227 the chain is Extracellular; the sequence is GVYQYTSPDFLYIR. Residues 228–245 form a helical membrane-spanning segment; it reads SWLPCIFFSGGVTVGNIG. Residues 246–259 lie on the Cytoplasmic side of the membrane; sequence RQLAMGVPEKPHSD. Positions 253–259 match the KxHxx motif; sequence PEKPHSD.

The protein belongs to the INSIG family. Interacts with SCAP; interaction is direct and only takes place in the presence of sterols; it prevents interaction between SCAP and the coat protein complex II (COPII). Associates with the SCAP-SREBP complex (composed of SCAP and SREBF1/SREBP1 or SREBF2/SREBP2); association is mediated via its interaction with SCAP and only takes place in the presence of sterols. Interaction with SCAP is mutually exclusive with PAQR3. Interacts with HMGCR (via its SSD); the interaction, accelerated by sterols, leads to the recruitment of HMGCR to AMFR/gp78 for its ubiquitination by the sterol-mediated ERAD pathway. Interacts with AMFR/gp78 (via its membrane domain); the interaction recruits HMCR at the ER membrane for its ubiquitination and degradation by the sterol-mediated ERAD pathway. Interacts with SOAT2/ACAT2; leading to promote recruitment of AMFR/gp78 and subsequent ubiquitination of SOAT2/ACAT2. Interacts with RNF139. Interacts with RNF145. In terms of processing, phosphorylation at Ser-189 by PCK1 reduces binding to oxysterol, disrupting the interaction between INSIG1 and SCAP, thereby promoting nuclear translocation of SREBP proteins (SREBF1/SREBP1 or SREBF2/SREBP2) and subsequent transcription of downstream lipogenesis-related genes. Ubiquitinated by AMFR/gp78 in response to sterol deprivation, leading to its degradation: when the SCAP-SREBP complex becomes dissociated from INSIG1, INSIG1 is then ubiquitinated and degraded in proteasomes. Although ubiquitination is required for rapid INSIG1 degradation, it is not required for release of the SCAP-SREBP complex. Ubiquitinated by RNF139.

Its subcellular location is the endoplasmic reticulum membrane. Oxysterol-binding protein that mediates feedback control of cholesterol synthesis by controlling both endoplasmic reticulum to Golgi transport of SCAP and degradation of HMGCR. Acts as a negative regulator of cholesterol biosynthesis by mediating the retention of the SCAP-SREBP complex in the endoplasmic reticulum, thereby blocking the processing of sterol regulatory element-binding proteins (SREBPs) SREBF1/SREBP1 and SREBF2/SREBP2. Binds oxysterol, including 25-hydroxycholesterol, regulating interaction with SCAP and retention of the SCAP-SREBP complex in the endoplasmic reticulum. In presence of oxysterol, interacts with SCAP, retaining the SCAP-SREBP complex in the endoplasmic reticulum, thereby preventing SCAP from escorting SREBF1/SREBP1 and SREBF2/SREBP2 to the Golgi. Sterol deprivation or phosphorylation by PCK1 reduce oxysterol-binding, disrupting the interaction between INSIG1 and SCAP, thereby promoting Golgi transport of the SCAP-SREBP complex, followed by processing and nuclear translocation of SREBF1/SREBP1 and SREBF2/SREBP2. Also regulates cholesterol synthesis by regulating degradation of HMGCR: initiates the sterol-mediated ubiquitin-mediated endoplasmic reticulum-associated degradation (ERAD) of HMGCR via recruitment of the reductase to the ubiquitin ligases AMFR/gp78 and/or RNF139. Also regulates degradation of SOAT2/ACAT2 when the lipid levels are low: initiates the ubiquitin-mediated degradation of SOAT2/ACAT2 via recruitment of the ubiquitin ligases AMFR/gp78. The sequence is that of Insulin-induced gene 1 protein from Mus musculus (Mouse).